The following is a 303-amino-acid chain: Ornithine carbamoyltransferase (303 aa).

Carbamoyl phosphate-binding positions include 52-55 (STRT), Gln-79, Arg-103, and 130-133 (HPCQ). Residues Asn-161, Asp-222, and 226–227 (SM) contribute to the L-ornithine site. Carbamoyl phosphate is bound by residues 262-263 (CL) and Arg-290.

Belongs to the aspartate/ornithine carbamoyltransferase superfamily. OTCase family.

The protein localises to the cytoplasm. It catalyses the reaction carbamoyl phosphate + L-ornithine = L-citrulline + phosphate + H(+). Its pathway is amino-acid biosynthesis; L-arginine biosynthesis; L-arginine from L-ornithine and carbamoyl phosphate: step 1/3. Its function is as follows. Reversibly catalyzes the transfer of the carbamoyl group from carbamoyl phosphate (CP) to the N(epsilon) atom of ornithine (ORN) to produce L-citrulline. The chain is Ornithine carbamoyltransferase from Geobacter sulfurreducens (strain ATCC 51573 / DSM 12127 / PCA).